The sequence spans 178 residues: Killin (178 aa).

Residues 8–50 mediate DNA binding; it reads SARPGRTVHVWGYRVEWKVRNGRKLQPSEWAGRGDLGGFKRRW.

The protein localises to the nucleus. Functionally, DNA-binding protein involved in S phase checkpoint control-coupled apoptosis by mediating p53/TP53-induced apoptosis. Has the ability to inhibit DNA synthesis and S phase arrest coupled to apoptosis. Has affinity to both double- and single-stranded DNA. This chain is Killin (KLLN), found in Homo sapiens (Human).